The following is a 326-amino-acid chain: Membrane-associated kinase regulator 5 (326 aa).

Disordered stretches follow at residues 188-239 and 267-326; these read TKKQ…GMSP and GSRE…KISD. Composition is skewed to low complexity over residues 190–202 and 270–305; these read KQSS…PTSS and ESSL…SSDS.

Expressed in roots.

The protein resides in the cell membrane. It localises to the cytoplasm. Its subcellular location is the cytosol. Functionally, positive effector of CLE45 peptide signaling. Post-transcriptionally regulated amplifier of the CLE45 peptide signal that acts downstream of BAM3 in the regulation of the transition of root protophloem cells from proliferation to differentiation; thus preventing primary root elongation but stimulating lateral roots development. In Arabidopsis thaliana (Mouse-ear cress), this protein is Membrane-associated kinase regulator 5.